A 338-amino-acid chain; its full sequence is Glycerol-3-phosphate dehydrogenase [NAD(P)+] (338 aa).

The NADPH site is built by Trp12, His33, and Lys110. Sn-glycerol 3-phosphate contacts are provided by Lys110, Gly142, and Ser144. Ala146 provides a ligand contact to NADPH. The sn-glycerol 3-phosphate site is built by Lys197, Asp250, Ser260, Arg261, and Asn262. The active-site Proton acceptor is the Lys197. Position 261 (Arg261) interacts with NADPH. The NADPH site is built by Val286 and Glu288.

The protein belongs to the NAD-dependent glycerol-3-phosphate dehydrogenase family.

Its subcellular location is the cytoplasm. The enzyme catalyses sn-glycerol 3-phosphate + NAD(+) = dihydroxyacetone phosphate + NADH + H(+). The catalysed reaction is sn-glycerol 3-phosphate + NADP(+) = dihydroxyacetone phosphate + NADPH + H(+). It functions in the pathway membrane lipid metabolism; glycerophospholipid metabolism. Catalyzes the reduction of the glycolytic intermediate dihydroxyacetone phosphate (DHAP) to sn-glycerol 3-phosphate (G3P), the key precursor for phospholipid synthesis. The chain is Glycerol-3-phosphate dehydrogenase [NAD(P)+] from Acidobacterium capsulatum (strain ATCC 51196 / DSM 11244 / BCRC 80197 / JCM 7670 / NBRC 15755 / NCIMB 13165 / 161).